A 503-amino-acid chain; its full sequence is Phenylalanine--tRNA ligase alpha subunit (503 aa).

S2 is modified (N-acetylserine). A contains the major tRNA-Phe binding sites region spans residues 2–173 (SDFQLEILKK…KRKLIAQGKI (172 aa)). L-phenylalanine contacts are provided by residues T333, 374–376 (QVE), and Y414. E416 serves as a coordination point for Mg(2+). F440 serves as a coordination point for L-phenylalanine.

It belongs to the class-II aminoacyl-tRNA synthetase family. Phe-tRNA synthetase alpha subunit type 2 subfamily. In terms of assembly, tetramer of two alpha and two beta subunits. It depends on Mg(2+) as a cofactor.

It localises to the cytoplasm. The catalysed reaction is tRNA(Phe) + L-phenylalanine + ATP = L-phenylalanyl-tRNA(Phe) + AMP + diphosphate + H(+). This Saccharomyces cerevisiae (strain ATCC 204508 / S288c) (Baker's yeast) protein is Phenylalanine--tRNA ligase alpha subunit (FRS2).